A 228-amino-acid polypeptide reads, in one-letter code: Small ribosomal subunit protein uS3 (228 aa).

The KH type-2 domain occupies 39–107 (VREYLQDKLK…PVHINIEEIR (69 aa)).

Belongs to the universal ribosomal protein uS3 family. Part of the 30S ribosomal subunit. Forms a tight complex with proteins S10 and S14.

Binds the lower part of the 30S subunit head. Binds mRNA in the 70S ribosome, positioning it for translation. In Pseudomonas syringae pv. syringae (strain B728a), this protein is Small ribosomal subunit protein uS3.